The chain runs to 364 residues: Probable transcription factor At4g00390 (364 aa).

The tract at residues M1–E149 is disordered. The segment covering S13–E32 has biased composition (acidic residues). Over residues A39–D80 the composition is skewed to low complexity. Residues S81–S93 show a composition bias toward acidic residues.

This sequence belongs to the GeBP family.

In Arabidopsis thaliana (Mouse-ear cress), this protein is Probable transcription factor At4g00390.